Reading from the N-terminus, the 149-residue chain is Calmodulin (149 aa).

Position 2 is an N-acetylalanine (alanine 2). 4 consecutive EF-hand domains span residues 8–43 (EQIA…LGQN), 44–79 (PTEA…KMKD), 81–116 (DSEE…LGEK), and 117–149 (LTDE…MTTK). Positions 21, 23, 25, 27, 32, 57, 59, 61, 63, 68, 94, 96, 98, and 105 each coordinate Ca(2+). Lysine 116 is modified (N6,N6,N6-trimethyllysine). Positions 130, 132, 134, 136, and 141 each coordinate Ca(2+).

The protein belongs to the calmodulin family. Interacts (in the presence of Ca(2+)) with pde-1, madf-3, rpl-7A, tax-6, efk-1, npp-1, obr-4, sos-1, akt-1, unc-13, tag-196, ugt-48, nmy-2, F27D4.4, ddx-23, efa-6 and R11H6.4.

In terms of biological role, calmodulin mediates the control of a large number of enzymes, ion channels and other proteins by Ca(2+). Among the enzymes to be stimulated by the calmodulin-Ca(2+) complex are a number of protein kinases and phosphatases. This chain is Calmodulin (cmd-1), found in Caenorhabditis elegans.